The primary structure comprises 370 residues: Phenylalanine dehydrogenase (370 aa).

Arg44 provides a ligand contact to NAD(+). Lys68 provides a ligand contact to L-phenylalanine. Catalysis depends on Lys80, which acts as the Proton donor/acceptor. 114–115 (TD) is a binding site for L-phenylalanine. NAD(+) contacts are provided by residues Asp115, Ser146, Thr150, 180-186 (GLGKVGF), 203-204 (DV), 243-244 (AI), and 264-266 (AAN). Asn266 provides a ligand contact to L-phenylalanine.

The protein belongs to the Glu/Leu/Phe/Val dehydrogenases family.

It catalyses the reaction L-phenylalanine + NAD(+) + H2O = 3-phenylpyruvate + NH4(+) + NADH + H(+). It participates in amino-acid biosynthesis; L-phenylalanine biosynthesis; L-phenylalanine from phenylpyruvate (PDH route): step 1/1. Catalyzes the reversible NAD(+)-dependent oxidative deamination of L-phenylalanine to phenylpyruvate. The protein is Phenylalanine dehydrogenase of Caldalkalibacillus thermarum (strain TA2.A1).